Reading from the N-terminus, the 93-residue chain is Large ribosomal subunit protein bL27 (93 aa).

The propeptide occupies 1–8 (MIMDLQFF). A disordered region spans residues 8–29 (FSHHKGGGSTANGRNSAGRRLG).

Belongs to the bacterial ribosomal protein bL27 family. The N-terminus is cleaved by ribosomal processing cysteine protease Prp.

This is Large ribosomal subunit protein bL27 from Limosilactobacillus reuteri (strain DSM 20016) (Lactobacillus reuteri).